An 815-amino-acid chain; its full sequence is MAEEQTALSLSWVFGASAHVKHGVVNLSDGYTDKICYLAANTAVIYDKRLRRQLFLQGHTSPITCIVTTEDRSHVVTADTGPEALLVVWNVRTGLPTRTVQQPHRHGVSTMDMSADGQWLATVSAADPESGEQEVSLWSMAALLTPPEAAPPGQGPLRPLVTTLVPAGDVQHSIRFSPNNPAELISNGRRRVYFWSWAPGSPRFQYYSPPLRSRDFKQSVGDFVSSVFVPGTTQALTATTDGDLVVWDEQGIAAQVGTSATDRRAIKLMRIHNCPITLLATVGDFIVSGGEDGYVRFFDPLLRIVAWFEDLAAGPVTSVAFSAVLPDRLAHADAADTLNRFMVPDFVVATRNSRIVSVQSASFEEYDADRRRGSSVLDSLLADVVDLAAHPTRAEFAVLGRDGGLQRWDSIAHCLLGGRAFERQVGACLTYSRDGSLLVVGFGSGHLHILNADDCSDLYVMRNTAAGLVRVAVSNTGKHIAAADENHQLLLYAYLPYKHTMRWEYVGRCRSHHGPIASVVFGESPSGQTRLLSVGGDGRVVEYDLAASSVAAGVQVASFYDFPPGGGAPTSLSFAPPLAYFQAFAADTHLLVSGADGTVASWDINTAPLERSATAAEGAGGEARWAAVLGDPDLLREMRDYFVYAQIKTQGEDALEPRDVPGTVPVDLVPDLMRSAGFYPSESDIDNLLHHVQYMAHSRNMESLEVVTLADLLCLYINHRPLFNVTHADIVAAFRELGGRGDPGSCVPKLSREQLLSLLQSTGEPMSGEELTAALAALTGAHTPEKSMPVSVAAEQFSADVLGFDTTEAGAEAAT.

10 WD repeats span residues 58–99 (GHTS…PTRT), 103–148 (PHRH…TPPE), 166–205 (PAGD…PRFQ), 218–257 (QSVG…AQVG), 271–308 (IHNC…VAWF), 379–418 (SLLA…LLGG), 420–460 (AFER…DLYV), 463–502 (NTAA…HTMR), 511–553 (SHHG…VAAG), and 573–612 (SFAP…LERS).

As to quaternary structure, identified in a spoke-associated complex containing CFAP61, CFAP91 and CFAP251; the complex is associated with the radial spokes in the axoneme. The complex associates with Calmodulin; the association is calcium sensitive.

The protein resides in the cytoplasm. Its subcellular location is the cytoskeleton. It is found in the flagellum axoneme. In terms of biological role, as component of a spoke-associated complex, regulates flagellar dynein activity by mediating regulatory signals between the radial spokes and dynein arms. This Chlamydomonas reinhardtii (Chlamydomonas smithii) protein is Cilia- and flagella-associated protein 251.